Here is a 360-residue protein sequence, read N- to C-terminus: MKKWVVKIGTSILRGNEDQSTEQVIESLCKSLTSFIFKGNKVILVTSGAVGLGCKKLNLNTRPKELSALQAVAAVGQVNLMTLYEKTMKKLGHNIAQILITKTDFDSRESFNNASKTFQKLIDLNVIPIVNENDSIANEELKYGDNDTLSALVALAINANKLILLTDIENLYSKDPRNNEDAHPIKEVNSNQLKIIKDKNIQNYNNEWGTGGITTKLIAAEIATKGGVEVQLADGRNENNLINIFNEKKIGTIFHPVDKPVGNKKSWLSHAIKTVGQITLDEGACLAIEQKGASLLVVGVKEVEGDFTVNQAVRIVNTNKKEVAKGITSMSSDSLKRILNKKENINSSMIVVHRDVLALT.

An ATP-binding site is contributed by Lys-7. The substrate site is built by Ser-47, Asp-134, and Asn-146. ATP-binding positions include 166–167 and 210–216; these read TD and TGGITTK. A PUA domain is found at 275-348; the sequence is VGQITLDEGA…LNKKENINSS (74 aa).

The protein belongs to the glutamate 5-kinase family.

Its subcellular location is the cytoplasm. It carries out the reaction L-glutamate + ATP = L-glutamyl 5-phosphate + ADP. Its pathway is amino-acid biosynthesis; L-proline biosynthesis; L-glutamate 5-semialdehyde from L-glutamate: step 1/2. Functionally, catalyzes the transfer of a phosphate group to glutamate to form L-glutamate 5-phosphate. This chain is Glutamate 5-kinase, found in Prochlorococcus marinus subsp. pastoris (strain CCMP1986 / NIES-2087 / MED4).